Reading from the N-terminus, the 311-residue chain is Elongation factor Ts (311 aa).

The segment at Thr81–Val84 is involved in Mg(2+) ion dislocation from EF-Tu.

Belongs to the EF-Ts family.

The protein resides in the cytoplasm. Functionally, associates with the EF-Tu.GDP complex and induces the exchange of GDP to GTP. It remains bound to the aminoacyl-tRNA.EF-Tu.GTP complex up to the GTP hydrolysis stage on the ribosome. The sequence is that of Elongation factor Ts from Trichlorobacter lovleyi (strain ATCC BAA-1151 / DSM 17278 / SZ) (Geobacter lovleyi).